The primary structure comprises 287 residues: Gliotoxin thiomethyltransferase GtmA (287 aa).

S-adenosyl-L-methionine is bound by residues Thr-27 and Ala-54. An intrachain disulfide couples Cys-55 to Cys-80. Residues Asp-82, Met-87, Asn-109, Ala-110, Ala-126, and Arg-248 each coordinate S-adenosyl-L-methionine.

It belongs to the class I-like SAM-binding methyltransferase superfamily.

The protein localises to the cytoplasm. It catalyses the reaction a thiol + S-adenosyl-L-methionine = a methyl thioether + S-adenosyl-L-homocysteine + H(+). In terms of biological role, S-methyltransferase that catalyzes the irreversible conversion of the secondary metabolite gliotoxin to bis(methylthio)gliotoxin (BmGT). Gliotoxin, a member of the epipolythiodioxopiperazine (ETP) class of toxins, is characterized by a disulfide bridged cyclic dipeptide. Its thiol groups are essential for bioactivity, as they conjugate to sulfur-containing proteins, disturb the intracellular redox equilibrium, and generate reactive oxygen species by cycling between reduced and oxidized states. The enzyme prevents self-intoxication of the fungus by irreversible conversion of the toxic gliotoxin to a biologically inactive bis-thiomethylated derivative. Appears to negatively regulate gliotoxin biosynthesis. This is Gliotoxin thiomethyltransferase GtmA from Aspergillus fumigatus (strain ATCC MYA-4609 / CBS 101355 / FGSC A1100 / Af293) (Neosartorya fumigata).